Reading from the N-terminus, the 360-residue chain is Peptide chain release factor 1 (360 aa).

N5-methylglutamine is present on glutamine 235. Positions 284–313 are disordered; it reads AKRQQAEASTRRNLLGSGDRSDRNRTYNFP.

Belongs to the prokaryotic/mitochondrial release factor family. Methylated by PrmC. Methylation increases the termination efficiency of RF1.

It localises to the cytoplasm. Its function is as follows. Peptide chain release factor 1 directs the termination of translation in response to the peptide chain termination codons UAG and UAA. The sequence is that of Peptide chain release factor 1 from Salmonella gallinarum (strain 287/91 / NCTC 13346).